Consider the following 26-residue polypeptide: ANPICPKIPNPTIRISGRNDLCVDVK.

In terms of assembly, disulfide-linked dimer of A and B chains. In terms of processing, glycosylated. High-mannose type oligosaccharides.

Functionally, lectin specific for galactose (Gal) and its derivatives. Induces apoptosis. Has cytotoxic activity against several human cancer cell lines. Is less cytotoxic to normal human cells. This Aralia elata (Japanese angelica tree) protein is Aralin B chain.